Here is a 431-residue protein sequence, read N- to C-terminus: MQMTTRVLTGITPSGTPHLGNYVGAIRPAIQASTATDAESFYFLADLHSLIKAQDPARTQRSTLEIAASWLACGLDPDKVWFYRQSDVPETTELMWLLTCVAGKGILNRAHAYKAAMDKNRAEGEDEDAGVTAGLFMYPVLMAADILIFNAHKVPVGRDQIQHIEMARDFAQRFNHVYGQDYFTLPDAVIDEQVATLPGLDGRKMSKSYNNTIPLFAPREELRKLVFSILTDSRAPGEAKDTQGSALFQLYQAFATPQETAAFAQAFADGISWADAKQQLFERIDLEIAPLRARYEALMAEPAKIEATLRAGGARLRARYATPLLAQLRDAVGLRDLSSQASAVGPATAVKAALPVFKQYRESDGQFYFKLHDAAGTLLLQSDGFASPREAGQLIARLKQAEDTTQLQLPGVQLPADAAPVLAALRALREA.

ATP-binding positions include 12–14 (TPS) and 20–21 (GN). The short motif at 13 to 21 (PSGTPHLGN) is the 'HIGH' region element. An L-tryptophan-binding site is contributed by Asp-145. Residues 157-159 (GRD), Leu-197, and 204-208 (KMSKS) each bind ATP. A 'KMSKS' region motif is present at residues 204–208 (KMSKS).

Belongs to the class-I aminoacyl-tRNA synthetase family. In terms of assembly, homodimer.

It is found in the cytoplasm. The enzyme catalyses tRNA(Trp) + L-tryptophan + ATP = L-tryptophyl-tRNA(Trp) + AMP + diphosphate + H(+). Catalyzes the attachment of tryptophan to tRNA(Trp). The chain is Tryptophan--tRNA ligase from Xanthomonas campestris pv. campestris (strain ATCC 33913 / DSM 3586 / NCPPB 528 / LMG 568 / P 25).